The following is a 282-amino-acid chain: Bifunctional protein FolD (282 aa).

Residues 164–166 (GRS) and serine 189 contribute to the NADP(+) site.

The protein belongs to the tetrahydrofolate dehydrogenase/cyclohydrolase family. As to quaternary structure, homodimer.

It carries out the reaction (6R)-5,10-methylene-5,6,7,8-tetrahydrofolate + NADP(+) = (6R)-5,10-methenyltetrahydrofolate + NADPH. The enzyme catalyses (6R)-5,10-methenyltetrahydrofolate + H2O = (6R)-10-formyltetrahydrofolate + H(+). Its pathway is one-carbon metabolism; tetrahydrofolate interconversion. Catalyzes the oxidation of 5,10-methylenetetrahydrofolate to 5,10-methenyltetrahydrofolate and then the hydrolysis of 5,10-methenyltetrahydrofolate to 10-formyltetrahydrofolate. The sequence is that of Bifunctional protein FolD from Streptococcus suis (strain 05ZYH33).